The primary structure comprises 380 residues: Cytochrome b (380 aa).

Transmembrane regions (helical) follow at residues F34 to M54, W78 to I99, W114 to L134, and F179 to T199. 2 residues coordinate heme b: H84 and H98. Positions 183 and 197 each coordinate heme b. A ubiquinone is bound at residue H202. 4 consecutive transmembrane segments (helical) span residues T227–S247, L289–H309, L321–S341, and F348–P368.

The protein belongs to the cytochrome b family. As to quaternary structure, the cytochrome bc1 complex contains 11 subunits: 3 respiratory subunits (MT-CYB, CYC1 and UQCRFS1), 2 core proteins (UQCRC1 and UQCRC2) and 6 low-molecular weight proteins (UQCRH/QCR6, UQCRB/QCR7, UQCRQ/QCR8, UQCR10/QCR9, UQCR11/QCR10 and a cleavage product of UQCRFS1). This cytochrome bc1 complex then forms a dimer. It depends on heme b as a cofactor.

The protein resides in the mitochondrion inner membrane. Its function is as follows. Component of the ubiquinol-cytochrome c reductase complex (complex III or cytochrome b-c1 complex) that is part of the mitochondrial respiratory chain. The b-c1 complex mediates electron transfer from ubiquinol to cytochrome c. Contributes to the generation of a proton gradient across the mitochondrial membrane that is then used for ATP synthesis. The polypeptide is Cytochrome b (MT-CYB) (Pygoscelis antarcticus (Chinstrap penguin)).